A 212-amino-acid chain; its full sequence is Phosphatidylserine decarboxylase proenzyme (212 aa).

S182 (schiff-base intermediate with substrate; via pyruvic acid) is an active-site residue. S182 bears the Pyruvic acid (Ser); by autocatalysis mark.

The protein belongs to the phosphatidylserine decarboxylase family. PSD-A subfamily. In terms of assembly, heterodimer of a large membrane-associated beta subunit and a small pyruvoyl-containing alpha subunit. Pyruvate is required as a cofactor. Is synthesized initially as an inactive proenzyme. Formation of the active enzyme involves a self-maturation process in which the active site pyruvoyl group is generated from an internal serine residue via an autocatalytic post-translational modification. Two non-identical subunits are generated from the proenzyme in this reaction, and the pyruvate is formed at the N-terminus of the alpha chain, which is derived from the carboxyl end of the proenzyme. The post-translation cleavage follows an unusual pathway, termed non-hydrolytic serinolysis, in which the side chain hydroxyl group of the serine supplies its oxygen atom to form the C-terminus of the beta chain, while the remainder of the serine residue undergoes an oxidative deamination to produce ammonia and the pyruvoyl prosthetic group on the alpha chain.

Its subcellular location is the cell membrane. It carries out the reaction a 1,2-diacyl-sn-glycero-3-phospho-L-serine + H(+) = a 1,2-diacyl-sn-glycero-3-phosphoethanolamine + CO2. It participates in phospholipid metabolism; phosphatidylethanolamine biosynthesis; phosphatidylethanolamine from CDP-diacylglycerol: step 2/2. In terms of biological role, catalyzes the formation of phosphatidylethanolamine (PtdEtn) from phosphatidylserine (PtdSer). In Paraburkholderia phytofirmans (strain DSM 17436 / LMG 22146 / PsJN) (Burkholderia phytofirmans), this protein is Phosphatidylserine decarboxylase proenzyme.